Reading from the N-terminus, the 236-residue chain is Purine nucleoside phosphorylase DeoD-type (236 aa).

His5 contacts a purine D-ribonucleoside. Phosphate contacts are provided by residues Gly21, Arg25, Arg44, and 88-91; that span reads RVGT. A purine D-ribonucleoside-binding positions include 180–182 and 204–205; these read EME and SD. Catalysis depends on Asp205, which acts as the Proton donor.

It belongs to the PNP/UDP phosphorylase family. In terms of assembly, homohexamer; trimer of homodimers.

The catalysed reaction is a purine D-ribonucleoside + phosphate = a purine nucleobase + alpha-D-ribose 1-phosphate. It carries out the reaction a purine 2'-deoxy-D-ribonucleoside + phosphate = a purine nucleobase + 2-deoxy-alpha-D-ribose 1-phosphate. Catalyzes the reversible phosphorolytic breakdown of the N-glycosidic bond in the beta-(deoxy)ribonucleoside molecules, with the formation of the corresponding free purine bases and pentose-1-phosphate. This is Purine nucleoside phosphorylase DeoD-type from Shewanella loihica (strain ATCC BAA-1088 / PV-4).